We begin with the raw amino-acid sequence, 1426 residues long: Nephrocystin-4 (1426 aa).

A Phosphoserine modification is found at S142. 2 disordered regions span residues 450 to 536 (GSEE…SPAQ) and 896 to 935 (RQGKGPQDVSRESDATRRRKLERMRSVRLQEAGGDLGRRG). Pro residues predominate over residues 474-486 (KPPTSPSSPPAPV). Polar residues predominate over residues 503-536 (SISQLAASPRSPTQHCLARPTSQLPHGSQASPAQ). The tract at residues 823-1426 (LTLANVGHPC…EAFCVKVIYQ (604 aa)) is sufficient for basal bodies localization.

This sequence belongs to the NPHP4 family. As to quaternary structure, interacts with NPHP1. Interacts with NPHP1 and RPGRIP1L/NPHP8; NPHP1, NPHP4 and RPGRIP1L are proposed to form a functional NPHP1-4-8 module localized to cell-cell contacts and the ciliary transition zone; NPHP4 mediates the interaction between NPHP1 and RPGRIP1L. Interacts with IQCB1/NPHP5; the interaction likely requires additional interactors. Interacts with RPGRIP1, CEP164, JADE1, PALS1, INADL, PARD6A, INVS, DVL2, LATS1. Interacts with INTU; INTU mediates the interaction between NPHP4 and DAAM1. Interacts with SPATA7. In terms of tissue distribution, expressed in kidney, skeletal muscle, heart and liver, and to a lesser extent in brain and lung.

It localises to the cytoplasm. It is found in the cytoskeleton. The protein resides in the cilium basal body. Its subcellular location is the microtubule organizing center. The protein localises to the centrosome. It localises to the cell junction. It is found in the tight junction. The protein resides in the nucleus. Its function is as follows. Involved in the organization of apical junctions; the function is proposed to implicate a NPHP1-4-8 module. Does not seem to be strictly required for ciliogenesis. Required for building functional cilia. Involved in the organization of the subapical actin network in multiciliated epithelial cells. Seems to recruit INT to basal bodies of motile cilia which subsequently interacts with actin-modifying proteins such as DAAM1. In cooperation with INVS may down-regulate the canonical Wnt pathway and promote the Wnt-PCP pathway by regulating expression and subcellular location of disheveled proteins. Stabilizes protein levels of JADE1 and promotes its translocation to the nucleus leading to cooperative inhibition of canonical Wnt signaling. Acts as a negative regulator of the hippo pathway by association with LATS1 and modifying LATS1-dependent phosphorylation and localization of WWTR1/TAZ. In Homo sapiens (Human), this protein is Nephrocystin-4 (NPHP4).